We begin with the raw amino-acid sequence, 518 residues long: ESX-3 secretion system ATPase EccB3 (518 aa).

The tract at residues 1 to 26 (MTGPVNPDDRRSFSSRTPVNENPDGV) is disordered. Residues 71–91 (VLTGALILVTGLVGCFIFSLF) traverse the membrane as a helical segment.

This sequence belongs to the EccB family. Part of the ESX-3 / type VII secretion system (T7SS), which is composed of cytosolic and membrane components. The ESX-3 membrane complex is composed of EccB3, EccC3, EccD3 and EccE3.

Its subcellular location is the cell inner membrane. In terms of biological role, an ATPase. Part of the ESX-3 specialized secretion system, which is required for siderophore-mediated iron acquisition and for the secretion of EsxH and EsxG. The sequence is that of ESX-3 secretion system ATPase EccB3 from Mycolicibacterium smegmatis (strain ATCC 700084 / mc(2)155) (Mycobacterium smegmatis).